A 613-amino-acid polypeptide reads, in one-letter code: Xaa-Pro aminopeptidase ApepP (613 aa).

Residues Arg77 and His388 each coordinate substrate. Residues Asp408, Asp419, and His482 each contribute to the Mn(2+) site. Substrate-binding residues include His482, His491, and Glu517. Residues Glu517 and Glu531 each coordinate Mn(2+).

This sequence belongs to the peptidase M24B family. Requires Mn(2+) as cofactor. In terms of tissue distribution, detected in gut, brain, testes and ovary.

Its subcellular location is the cytoplasm. It carries out the reaction Release of any N-terminal amino acid, including proline, that is linked to proline, even from a dipeptide or tripeptide.. With respect to regulation, inhibited by the chelating agent EDTA. Divalent metal ions have substrate- and concentration-dependent effects on activity. Activity towards bradykinin is inhibited with increasing Mn(2+) concentration. Activity towards substance P is stimulated by low Mn(2+) concentrations (in the range 10 uM-1 mM) but inhibited by Mn(2+) concentrations in excess of 1 mM. Ca(2+), Mg(2+) and Co(2+) stimulate activity towards substance P at concentrations of 10-100 uM but are inhibitory at concentrations of 1 mM. Zn(2+), Ni(2+) and Cu(2+) strongly inhibit activity towards substance P at concentrations of 1 mM. Catalyzes the removal of a penultimate prolyl residue from the N-termini of peptides, such as Arg-Pro-Pro. In Drosophila melanogaster (Fruit fly), this protein is Xaa-Pro aminopeptidase ApepP.